A 518-amino-acid polypeptide reads, in one-letter code: Sensor protein kinase HptS (518 aa).

The next 2 membrane-spanning stretches (helical) occupy residues 20–40 (IFPVFLVIIIGLVSFYAIYIW) and 222–242 (GITLLIVMAVVLVLLVIFGFI). A Histidine kinase domain is found at 297–513 (EQLIHSIEHT…LICYKIPLSR (217 aa)). Histidine 325 is subject to Phosphohistidine; by autocatalysis.

Post-translationally, autophosphorylated.

Its subcellular location is the cell membrane. The catalysed reaction is ATP + protein L-histidine = ADP + protein N-phospho-L-histidine.. Its function is as follows. Member of the two-component regulatory system HptS/HptR that regulates genes involved in hexose phosphate transport system in response to changes in extracellular phosphate sources. May act as a sensor protein kinase which is autophosphorylated at a histidine residue and transfers its phosphate group to the conserved aspartic acid residue in the regulatory domain of HptS. In turn, HptS antagonizes CcpA-dependent transcription of a subset of CcpA-regulated genes involved in antibiotic susceptibility. In Staphylococcus aureus (strain MRSA252), this protein is Sensor protein kinase HptS (hptS).